The sequence spans 475 residues: Ribulose bisphosphate carboxylase large chain (475 aa).

A propeptide spanning residues 1–2 (MS) is cleaved from the precursor. At Pro3 the chain carries N-acetylproline. Residue Lys14 is modified to N6,N6,N6-trimethyllysine. The substrate site is built by Asn123 and Thr173. Lys175 functions as the Proton acceptor in the catalytic mechanism. A substrate-binding site is contributed by Lys177. 3 residues coordinate Mg(2+): Lys201, Asp203, and Glu204. Lys201 is modified (N6-carboxylysine). His294 (proton acceptor) is an active-site residue. Substrate is bound by residues Arg295, His327, and Ser379.

Belongs to the RuBisCO large chain family. Type I subfamily. Heterohexadecamer of 8 large chains and 8 small chains; disulfide-linked. The disulfide link is formed within the large subunit homodimers. Mg(2+) serves as cofactor. The disulfide bond which can form in the large chain dimeric partners within the hexadecamer appears to be associated with oxidative stress and protein turnover.

The protein localises to the plastid. Its subcellular location is the chloroplast. The enzyme catalyses 2 (2R)-3-phosphoglycerate + 2 H(+) = D-ribulose 1,5-bisphosphate + CO2 + H2O. It carries out the reaction D-ribulose 1,5-bisphosphate + O2 = 2-phosphoglycolate + (2R)-3-phosphoglycerate + 2 H(+). In terms of biological role, ruBisCO catalyzes two reactions: the carboxylation of D-ribulose 1,5-bisphosphate, the primary event in carbon dioxide fixation, as well as the oxidative fragmentation of the pentose substrate in the photorespiration process. Both reactions occur simultaneously and in competition at the same active site. This Amaranthus tricolor (Joseph's coat) protein is Ribulose bisphosphate carboxylase large chain.